The primary structure comprises 458 residues: tRNA modification GTPase MnmE (458 aa).

Arginine 26, glutamate 88, and arginine 127 together coordinate (6S)-5-formyl-5,6,7,8-tetrahydrofolate. A TrmE-type G domain is found at 224–378 (GLSTAIIGRP…IEDRINQLFF (155 aa)). A K(+)-binding site is contributed by asparagine 234. GTP contacts are provided by residues 234 to 239 (NVGKSS), 253 to 259 (TDIAGTT), and 278 to 281 (DTAG). Position 238 (serine 238) interacts with Mg(2+). 3 residues coordinate K(+): threonine 253, isoleucine 255, and threonine 258. Threonine 259 is a binding site for Mg(2+). A (6S)-5-formyl-5,6,7,8-tetrahydrofolate-binding site is contributed by lysine 458.

Belongs to the TRAFAC class TrmE-Era-EngA-EngB-Septin-like GTPase superfamily. TrmE GTPase family. In terms of assembly, homodimer. Heterotetramer of two MnmE and two MnmG subunits. K(+) is required as a cofactor.

The protein resides in the cytoplasm. Its function is as follows. Exhibits a very high intrinsic GTPase hydrolysis rate. Involved in the addition of a carboxymethylaminomethyl (cmnm) group at the wobble position (U34) of certain tRNAs, forming tRNA-cmnm(5)s(2)U34. The chain is tRNA modification GTPase MnmE from Streptococcus pyogenes serotype M5 (strain Manfredo).